Reading from the N-terminus, the 281-residue chain is Insulin-like growth factor-binding protein 2 (281 aa).

The N-terminal stretch at 1–21 (MVLSEHLLVLLGAVLCAPALS) is a signal peptide. Positions 23–106 (VLFRCPPCSP…VLGLGTCGKR (84 aa)) constitute an IGFBP N-terminal domain. Cystine bridges form between C27–C56, C30–C58, C38–C59, C47–C62, C70–C83, and C77–C103. 2 disordered regions span residues 107 to 127 (RDAEYGSSQERGTELPEDQSD) and 139 to 180 (PAVP…RPAR). A compositionally biased stretch (basic and acidic residues) spans 156-176 (VNRERANEQHRSKTNKSEDKK). The Thyroglobulin type-1 domain occupies 180-262 (RSLCQLQLDQ…SPTVRGDPEC (83 aa)). 3 cysteine pairs are disulfide-bonded: C183–C217, C228–C239, and C241–C262. The Cell attachment site signature appears at 257 to 259 (RGD).

As to quaternary structure, interacts with igf1 and igf2.

It localises to the secreted. Functionally, IGF-binding proteins prolong the half-life of the IGFs and have been shown to either inhibit or stimulate the growth promoting effects of the IGFs on cell culture. They alter the interaction of IGFs with their cell surface receptors. In Xenopus laevis (African clawed frog), this protein is Insulin-like growth factor-binding protein 2 (igfbp2).